The primary structure comprises 210 residues: Small ribosomal subunit protein uS3 (210 aa).

Positions 38–106 (LRSFLKKRLY…EVYLNIQEVR (69 aa)) constitute a KH type-2 domain.

It belongs to the universal ribosomal protein uS3 family. In terms of assembly, part of the 30S ribosomal subunit. Forms a tight complex with proteins S10 and S14.

Its function is as follows. Binds the lower part of the 30S subunit head. Binds mRNA in the 70S ribosome, positioning it for translation. This is Small ribosomal subunit protein uS3 from Geotalea uraniireducens (strain Rf4) (Geobacter uraniireducens).